A 534-amino-acid polypeptide reads, in one-letter code: NEDD8-activating enzyme E1 regulatory subunit (534 aa).

Ala-2 is modified (N-acetylalanine). N6-acetyllysine is present on residues Lys-6 and Lys-341. An interaction with UBA3 region spans residues 331-344; that stretch reads DMIADSGKYIKLQN.

This sequence belongs to the ubiquitin-activating E1 family. ULA1 subfamily. In terms of assembly, heterodimer of UBA3 and NAE1. The complex binds NEDD8 and UBE2M. Binds APP and TP53BP2. Post-translationally, ubiquitinated by TRIP12, leading to its degradation by the proteasome. As to expression, ubiquitous in fetal tissues. Expressed throughout the adult brain.

It localises to the cell membrane. It functions in the pathway protein modification; protein neddylation. Binding of TP53BP2 to the regulatory subunit NAE1 decreases neddylation activity. Functionally, regulatory subunit of the dimeric UBA3-NAE1 E1 enzyme. E1 activates NEDD8 by first adenylating its C-terminal glycine residue with ATP, thereafter linking this residue to the side chain of the catalytic cysteine, yielding a NEDD8-UBA3 thioester and free AMP. E1 finally transfers NEDD8 to the catalytic cysteine of UBE2M. Necessary for cell cycle progression through the S-M checkpoint. Overexpression of NAE1 causes apoptosis through deregulation of NEDD8 conjugation. The covalent attachment of NEDD8 to target proteins is known as 'neddylation' and the process is involved in the regulation of cell growth, viability and development. In Homo sapiens (Human), this protein is NEDD8-activating enzyme E1 regulatory subunit (NAE1).